Reading from the N-terminus, the 686-residue chain is Methionine--tRNA ligase (686 aa).

The 'HIGH' region motif lies at 15–25 (PYANGSIHLGH). Residues Cys146, Cys149, Cys159, and Cys162 each contribute to the Zn(2+) site. Residues 332–336 (KMSKS) carry the 'KMSKS' region motif. Residue Lys335 participates in ATP binding. One can recognise a tRNA-binding domain in the interval 585 to 686 (AFEAVDMRIA…EGAQPGMRVM (102 aa)).

This sequence belongs to the class-I aminoacyl-tRNA synthetase family. MetG type 1 subfamily. Homodimer. It depends on Zn(2+) as a cofactor.

Its subcellular location is the cytoplasm. The catalysed reaction is tRNA(Met) + L-methionine + ATP = L-methionyl-tRNA(Met) + AMP + diphosphate. In terms of biological role, is required not only for elongation of protein synthesis but also for the initiation of all mRNA translation through initiator tRNA(fMet) aminoacylation. This chain is Methionine--tRNA ligase, found in Aliivibrio fischeri (strain MJ11) (Vibrio fischeri).